A 370-amino-acid chain; its full sequence is Arginine kinase (370 aa).

Residues 6–89 form the Phosphagen kinase N-terminal domain; it reads QKKYPAKDDF…FDPVIEEYHN (84 aa). The Phosphagen kinase C-terminal domain maps to 115-358; it reads YVISSRVRTG…KVLIEMEKKL (244 aa). Residues 118–122 and H181 contribute to the ATP site; that span reads SSRVR. E222 contacts substrate. R226 is an ATP binding site. Residue C274 participates in substrate binding. Residues 283–287 and 311–316 each bind ATP; these read RCSVH and RGTSGE. E316 contacts substrate.

Belongs to the ATP:guanido phosphotransferase family. In terms of assembly, homodimer. In terms of processing, the N-terminus is blocked.

It catalyses the reaction L-arginine + ATP = N(omega)-phospho-L-arginine + ADP + H(+). The polypeptide is Arginine kinase (AK) (Stichopus japonicus (Sea cucumber)).